The primary structure comprises 147 residues: Hemoglobin subunit gamma (147 aa).

A Globin domain is found at 3–147; it reads YFTAEEKAAI…VASALARKYH (145 aa). Residues His-64 and His-93 each contribute to the heme b site.

It belongs to the globin family. Heterotetramer of two alpha chains and two gamma chains in fetal hemoglobin (Hb F). In terms of tissue distribution, red blood cells.

Functionally, gamma chains make up the fetal hemoglobin F, in combination with alpha chains. In Dugong dugon (Dugong), this protein is Hemoglobin subunit gamma (HBG).